Here is a 472-residue protein sequence, read N- to C-terminus: Lactate utilization protein B (472 aa).

4Fe-4S ferredoxin-type domains lie at 304–334 (GTEF…GHSY) and 353–382 (YDDY…LHEL). [4Fe-4S] cluster contacts are provided by C313, C316, C319, C323, C366, C369, and C373.

The protein belongs to the LutB/YkgF family.

In terms of biological role, is involved in L-lactate degradation and allows cells to grow with lactate as the sole carbon source. Has probably a role as an electron transporter during oxidation of L-lactate. In Anoxybacillus flavithermus (strain DSM 21510 / WK1), this protein is Lactate utilization protein B.